Here is a 565-residue protein sequence, read N- to C-terminus: MSEQKLAVNEYLKTDSDYLRGTIQQGLNTAVTGAFSEGDQQLIKFHGFYQQDDRDLRNERKEQKLEPLYSFMLRARVAGGVCSPEQWLAVDKIASNLTSANSIRLTTRQTFQYHGIPKRNLKTIIQDLDREALDSIAACGDVNRNVMCNPNPVESKLHQQAYAYAKQLSDNMLPHTKAYAEIWLDNEKLVTTEGEEVEPVYGQTYLPRKFKMAVAVPPDNDVDVYTNDLGFIAVAEGDELVGFNMVAGGGMGSTHGEVSTFPRLADDFGYIKAEDSLKFAEAVMTIQRDWGNRENRKLSRLKYTIVKHGFETFKAEIEARTGIKFEPRRDVVIGDRGDRYGWKQGVDDNWHLTLFIEGGRVKDLPGQPLQTGLREIAKIHRGDFRMTSNQNMIIAGVASADKEQIEGLARQYGLLGKLITETRGHSIACVALPTCALAMAEAERYFPDFLTKVEALQQKHGFLDQGIVIRMTGCPNGCARPFAAEIGLVGKAPGRYNLYLGASFEGTRLNKLYRENIQEAEILDQLDTLFAQYASQRQAGETFGNYTVRSGVVAAVNDAAKDFHG.

Residues Cys-429, Cys-435, Cys-474, and Cys-478 each contribute to the [4Fe-4S] cluster site. Cys-478 is a siroheme binding site.

It belongs to the nitrite and sulfite reductase 4Fe-4S domain family. As to quaternary structure, alpha(8)-beta(8). The alpha component is a flavoprotein, the beta component is a hemoprotein. Requires siroheme as cofactor. The cofactor is [4Fe-4S] cluster.

It catalyses the reaction hydrogen sulfide + 3 NADP(+) + 3 H2O = sulfite + 3 NADPH + 4 H(+). It participates in sulfur metabolism; hydrogen sulfide biosynthesis; hydrogen sulfide from sulfite (NADPH route): step 1/1. In terms of biological role, component of the sulfite reductase complex that catalyzes the 6-electron reduction of sulfite to sulfide. This is one of several activities required for the biosynthesis of L-cysteine from sulfate. In Shewanella halifaxensis (strain HAW-EB4), this protein is Sulfite reductase [NADPH] hemoprotein beta-component.